The following is an 89-amino-acid chain: Small ribosomal subunit protein uS15 (89 aa).

Belongs to the universal ribosomal protein uS15 family. Part of the 30S ribosomal subunit. Forms a bridge to the 50S subunit in the 70S ribosome, contacting the 23S rRNA.

One of the primary rRNA binding proteins, it binds directly to 16S rRNA where it helps nucleate assembly of the platform of the 30S subunit by binding and bridging several RNA helices of the 16S rRNA. In terms of biological role, forms an intersubunit bridge (bridge B4) with the 23S rRNA of the 50S subunit in the ribosome. The chain is Small ribosomal subunit protein uS15 from Ralstonia nicotianae (strain ATCC BAA-1114 / GMI1000) (Ralstonia solanacearum).